We begin with the raw amino-acid sequence, 159 residues long: IQ domain-containing protein J (159 aa).

Positions 47 to 67 (ESKVKIIQRAWREYLQRQEPL) constitute an IQ domain. The disordered stretch occupies residues 63-88 (RQEPLGKRSPSPPSVSSEKLSSSVSM). Over residues 76–87 (SVSSEKLSSSVS) the composition is skewed to low complexity.

This Homo sapiens (Human) protein is IQ domain-containing protein J.